The following is a 328-amino-acid chain: Thiamine thiazole synthase (328 aa).

Residues alanine 87, 108–109 (EA), glycine 116, and valine 181 each bind substrate. At cysteine 215 the chain carries 2,3-didehydroalanine (Cys). Substrate contacts are provided by residues aspartate 217, histidine 232, methionine 284, and 294 to 296 (RMG).

The protein belongs to the THI4 family. As to quaternary structure, homooctamer. The cofactor is Fe cation. Post-translationally, during the catalytic reaction, a sulfide is transferred from Cys-215 to a reaction intermediate, generating a dehydroalanine residue.

It is found in the cytoplasm. The protein localises to the nucleus. The catalysed reaction is [ADP-thiazole synthase]-L-cysteine + glycine + NAD(+) = [ADP-thiazole synthase]-dehydroalanine + ADP-5-ethyl-4-methylthiazole-2-carboxylate + nicotinamide + 3 H2O + 2 H(+). Functionally, involved in biosynthesis of the thiamine precursor thiazole. Catalyzes the conversion of NAD and glycine to adenosine diphosphate 5-(2-hydroxyethyl)-4-methylthiazole-2-carboxylic acid (ADT), an adenylated thiazole intermediate. The reaction includes an iron-dependent sulfide transfer from a conserved cysteine residue of the protein to a thiazole intermediate. The enzyme can only undergo a single turnover, which suggests it is a suicide enzyme. May have additional roles in adaptation to various stress conditions and in DNA damage tolerance. This is Thiamine thiazole synthase (thi2) from Schizosaccharomyces pombe (strain 972 / ATCC 24843) (Fission yeast).